Consider the following 144-residue polypeptide: RxLR effector protein PITG_03192 (144 aa).

The signal sequence occupies residues 1–24 (MRVGFVFALLVVSVIVCFNGLTSA). The RxLR-dEER signature appears at 49 to 58 (RNLRASGEER). An N-linked (GlcNAc...) asparagine glycan is attached at N115. The chain crosses the membrane as a helical span at residues 122-142 (FFILATLVMFPIGVWAVVTNY).

It belongs to the RxLR effector family. In terms of assembly, interacts with the C-terminal portions the ER-associated potato NAC transcription factors NTP1 and NTP2.

The protein localises to the secreted. Its subcellular location is the host endoplasmic reticulum membrane. Its function is as follows. Effector that is required for full virulence. Targets host NTP1 and NTP2 transcription factors and prevents their pathogen-associated molecular pattern (PAMP)-triggered re-localization from the endoplasmic reticulum into the nucleus, where they contribute to prevent disease progression by P.infestans. This is RxLR effector protein PITG_03192 from Phytophthora infestans (strain T30-4) (Potato late blight agent).